The primary structure comprises 279 residues: Oxygen-dependent coproporphyrinogen-III oxidase (279 aa).

Ser-102 provides a ligand contact to substrate. Residues His-106 and His-116 each contribute to the a divalent metal cation site. Residue His-116 is the Proton donor of the active site. Substrate is bound at residue 118 to 120 (NTR). His-149 and His-179 together coordinate a divalent metal cation. The interval 244 to 279 (YVEFNLLYDRGTKFGLMTDGNIEAILMSLPPVVKFN) is important for dimerization.

This sequence belongs to the aerobic coproporphyrinogen-III oxidase family. In terms of assembly, homodimer. A divalent metal cation is required as a cofactor.

The protein resides in the cytoplasm. It carries out the reaction coproporphyrinogen III + O2 + 2 H(+) = protoporphyrinogen IX + 2 CO2 + 2 H2O. Its pathway is porphyrin-containing compound metabolism; protoporphyrin-IX biosynthesis; protoporphyrinogen-IX from coproporphyrinogen-III (O2 route): step 1/1. Its function is as follows. Involved in the heme biosynthesis. Catalyzes the aerobic oxidative decarboxylation of propionate groups of rings A and B of coproporphyrinogen-III to yield the vinyl groups in protoporphyrinogen-IX. The polypeptide is Oxygen-dependent coproporphyrinogen-III oxidase (Rickettsia typhi (strain ATCC VR-144 / Wilmington)).